Reading from the N-terminus, the 75-residue chain is DNA-directed RNA polymerase subunit epsilon (75 aa).

This sequence belongs to the RNA polymerase subunit epsilon family. In terms of assembly, RNAP is composed of a core of 2 alpha, a beta and a beta' subunit. The core is associated with a delta subunit, and at least one of epsilon or omega. When a sigma factor is associated with the core the holoenzyme is formed, which can initiate transcription.

The enzyme catalyses RNA(n) + a ribonucleoside 5'-triphosphate = RNA(n+1) + diphosphate. Its function is as follows. A non-essential component of RNA polymerase (RNAP). This Lactobacillus johnsonii (strain CNCM I-12250 / La1 / NCC 533) protein is DNA-directed RNA polymerase subunit epsilon.